A 335-amino-acid chain; its full sequence is NADH-quinone oxidoreductase subunit H (335 aa).

A run of 8 helical transmembrane segments spans residues 11–31, 81–101, 114–134, 154–174, 187–207, 238–258, 270–290, and 307–327; these read VILT…AGAL, VIFT…FAII, IGLL…LFAG, VSYE…VGSF, LWFI…GVAV, FFVG…TLFF, QLSF…FILL, and WKFC…VVLW.

The protein belongs to the complex I subunit 1 family. NDH-1 is composed of 13 different subunits. Subunits NuoA, H, J, K, L, M, N constitute the membrane sector of the complex.

Its subcellular location is the cell inner membrane. It catalyses the reaction a quinone + NADH + 5 H(+)(in) = a quinol + NAD(+) + 4 H(+)(out). Its function is as follows. NDH-1 shuttles electrons from NADH, via FMN and iron-sulfur (Fe-S) centers, to quinones in the respiratory chain. The immediate electron acceptor for the enzyme in this species is believed to be ubiquinone. Couples the redox reaction to proton translocation (for every two electrons transferred, four hydrogen ions are translocated across the cytoplasmic membrane), and thus conserves the redox energy in a proton gradient. This subunit may bind ubiquinone. In Pseudomonas fluorescens (strain ATCC BAA-477 / NRRL B-23932 / Pf-5), this protein is NADH-quinone oxidoreductase subunit H.